The following is a 210-amino-acid chain: Proteasome subunit beta (210 aa).

Residues M1–G9 constitute a propeptide, removed in mature form; by autocatalysis. Residue T10 is the Nucleophile of the active site.

Belongs to the peptidase T1B family. The 20S proteasome core is composed of 14 alpha and 14 beta subunits that assemble into four stacked heptameric rings, resulting in a barrel-shaped structure. The two inner rings, each composed of seven catalytic beta subunits, are sandwiched by two outer rings, each composed of seven alpha subunits. The catalytic chamber with the active sites is on the inside of the barrel. Has a gated structure, the ends of the cylinder being occluded by the N-termini of the alpha-subunits. Is capped at one or both ends by the proteasome regulatory ATPase, PAN.

The protein resides in the cytoplasm. The catalysed reaction is Cleavage of peptide bonds with very broad specificity.. With respect to regulation, the formation of the proteasomal ATPase PAN-20S proteasome complex, via the docking of the C-termini of PAN into the intersubunit pockets in the alpha-rings, triggers opening of the gate for substrate entry. Interconversion between the open-gate and close-gate conformations leads to a dynamic regulation of the 20S proteasome proteolysis activity. Functionally, component of the proteasome core, a large protease complex with broad specificity involved in protein degradation. In Methanothermobacter thermautotrophicus (strain ATCC 29096 / DSM 1053 / JCM 10044 / NBRC 100330 / Delta H) (Methanobacterium thermoautotrophicum), this protein is Proteasome subunit beta.